The following is a 439-amino-acid chain: Xylose isomerase (439 aa).

Residues histidine 99 and aspartate 102 contribute to the active site. 7 residues coordinate Mg(2+): glutamate 230, glutamate 266, histidine 269, aspartate 294, aspartate 305, aspartate 307, and aspartate 337.

It belongs to the xylose isomerase family. Homotetramer. Mg(2+) serves as cofactor.

The protein localises to the cytoplasm. The catalysed reaction is alpha-D-xylose = alpha-D-xylulofuranose. This is Xylose isomerase from Oceanobacillus iheyensis (strain DSM 14371 / CIP 107618 / JCM 11309 / KCTC 3954 / HTE831).